A 374-amino-acid polypeptide reads, in one-letter code: F-box/LRR-repeat protein 8 (374 aa).

In terms of domain architecture, F-box spans 2 to 48; it reads GELVDNLPEEVLALIFRDLPLRDLAVATRVCRAWAAAAANSTVWSDK.

Directly interacts with SKP1 and CUL1. Widely expressed during embryogenesis and in adult tissues.

Its function is as follows. Substrate-recognition component of the SCF (SKP1-CUL1-F-box protein)-type E3 ubiquitin ligase complex. This is F-box/LRR-repeat protein 8 (Fbxl8) from Mus musculus (Mouse).